The sequence spans 285 residues: Transmembrane protein DDB_G0269096 (285 aa).

Disordered stretches follow at residues 1 to 25 and 59 to 87; these read MEDRNLERNIGSDISSSSSIDMSQS and SFENGENNNNNNNNNNNNNNNNNNNNNKN. Low complexity-rich tracts occupy residues 12-25 and 65-85; these read SDISSSSSIDMSQS and NNNNNNNNNNNNNNNNNNNNN. Transmembrane regions (helical) follow at residues 124-144, 152-172, 182-202, 205-225, and 250-270; these read LEEIGWTWLASFTGILVLALI, AQMQVLIGSFAASAVIIFGVP, LIMGHFLSAVVGSVIRVALVY, ANFEVACALAVSLSIMLMQFT, and FYFIFVPILSGALIMLLTALV.

Its subcellular location is the membrane. This Dictyostelium discoideum (Social amoeba) protein is Transmembrane protein DDB_G0269096.